Consider the following 673-residue polypeptide: Probable boron transporter 7 (673 aa).

Residues 1-35 (MEGVKFPFGGIINDFNGRRKCYKQDWLAAFNSGVR) are Cytoplasmic-facing. The chain crosses the membrane as a helical span at residues 36-56 (ILAPTLYIFIASALPVIAFGE). The Extracellular portion of the chain corresponds to 57–75 (QLSRETDRSLGIAESLAST). The chain crosses the membrane as a helical span at residues 76–96 (ALCGIIHSVFGGQPLLIVGVA). Residues 97-121 (EPTIIMYTYLHSFSKSRPELGQKLY) are Cytoplasmic-facing. Residues 122 to 142 (LAWAGWVCVWTAVLLMLLAML) traverse the membrane as a helical segment. At 143–160 (NACNIISRFTRIAGELFG) the chain is on the extracellular side. A helical transmembrane segment spans residues 161-181 (MLITVLFIQEAVKGLIGEFLV). At 182–197 (PKSDDPSLEVYQFQWR) the chain is on the cytoplasmic side. Residues 198-218 (YTNGLLAVIFSFGLLYTALKS) form a helical membrane-spanning segment. Topologically, residues 219–233 (RRARSWKYGFRWMRG) are extracellular. The chain crosses the membrane as a helical span at residues 234 to 254 (FIGDYGTLLMLVLWSAFSYTV). Topologically, residues 255-289 (PRNLPEGVPRRLELPLPWASESLYHWTVVKDMAKV) are cytoplasmic. A helical transmembrane segment spans residues 290 to 310 (PPLYILAAFIPAIMIAGLYFF). Residues 311–330 (DHCVSAQMAQQKEFNLKNPT) lie on the Extracellular side of the membrane. The helical transmembrane segment at 331-351 (AYHYDIFILGIMTLICGLLGL) threads the bilayer. Topologically, residues 352 to 468 (PPSNGVIPQS…EQRVSNLLQS (117 aa)) are cytoplasmic. A helical membrane pass occupies residues 469–489 (VLVGLLILAVPVLRMIPTSVL). The Extracellular portion of the chain corresponds to 490–556 (WGYFTYMAVD…QLLYFLICYG (67 aa)). The chain crosses the membrane as a helical span at residues 557–577 (VTWIPVGGILFPLPFFILIAL). Residues 578-673 (RQYILQRLFD…SQMVKIYNHS (96 aa)) are Cytoplasmic-facing.

The protein belongs to the anion exchanger (TC 2.A.31.3) family.

The protein resides in the membrane. Putative boron transporter. Boron is essential for maintaining the integrity of plants cell walls. The chain is Probable boron transporter 7 (BOR7) from Arabidopsis thaliana (Mouse-ear cress).